The chain runs to 143 residues: Hemoglobin subunit alpha-2 (143 aa).

Serine 2 carries the N-acetylserine modification. The Globin domain occupies 2–143 (SLSAKDKATV…LALALSEKYR (142 aa)). Histidine 60 contributes to the O2 binding site. Position 89 (histidine 89) interacts with heme b.

This sequence belongs to the globin family. Hb 2 is a heterotetramer of two alpha-2 and two beta-1 chains. Hb 3 is a heterotetramer of two alpha-2 and two beta-2 chains. Red blood cells.

In terms of biological role, involved in oxygen transport from gills to the various peripheral tissues. The protein is Hemoglobin subunit alpha-2 (hba2) of Boreogadus saida (Polar cod).